The chain runs to 94 residues: Large ribosomal subunit protein uL23 (94 aa).

Belongs to the universal ribosomal protein uL23 family. As to quaternary structure, part of the 50S ribosomal subunit. Contacts protein L29, and trigger factor when it is bound to the ribosome.

One of the early assembly proteins it binds 23S rRNA. One of the proteins that surrounds the polypeptide exit tunnel on the outside of the ribosome. Forms the main docking site for trigger factor binding to the ribosome. This chain is Large ribosomal subunit protein uL23, found in Trichlorobacter lovleyi (strain ATCC BAA-1151 / DSM 17278 / SZ) (Geobacter lovleyi).